A 379-amino-acid chain; its full sequence is Glutamate 5-kinase (379 aa).

Residue lysine 19 participates in ATP binding. Serine 59, aspartate 146, and asparagine 158 together coordinate substrate. ATP-binding positions include 178–179 and 220–226; these read TD and TGGMATK. The PUA domain maps to 285 to 363; the sequence is SGDIIIDDGA…KDIISILGHD (79 aa).

The protein belongs to the glutamate 5-kinase family.

The protein resides in the cytoplasm. The enzyme catalyses L-glutamate + ATP = L-glutamyl 5-phosphate + ADP. It functions in the pathway amino-acid biosynthesis; L-proline biosynthesis; L-glutamate 5-semialdehyde from L-glutamate: step 1/2. Its function is as follows. Catalyzes the transfer of a phosphate group to glutamate to form L-glutamate 5-phosphate. The protein is Glutamate 5-kinase of Vibrio campbellii (strain ATCC BAA-1116).